The sequence spans 254 residues: Low affinity immunoglobulin gamma Fc region receptor III-A (254 aa).

Positions 1–16 (MWQLLLPTALLLLVSA) are cleaved as a signal peptide. The Extracellular portion of the chain corresponds to 17–208 (GMRAEDLPKA…ISSFFPPGYQ (192 aa)). Ig-like C2-type domains lie at 24–105 (PKAV…LEVH) and 107–189 (GWLL…VNIT). 2 disulfide bridges follow: Cys47-Cys89 and Cys128-Cys172. N-linked (GlcNAc...) asparagine glycosylation is found at Asn56, Asn63, and Asn82. 2 N-linked (GlcNAc...) asparagine glycosylation sites follow: Asn180 and Asn187. Residues 209 to 229 (VSFCLVMVLLFAVDTGLYFSM) form a helical membrane-spanning segment. Residues 230-254 (KKSIPSSTRDWEDHKFKWSKDPQDK) lie on the Cytoplasmic side of the membrane.

Forms a heterooligomeric complex with ITAM-containing signaling subunits, either a homodimer of CD247, a homodimer of FCER1G or a heterodimer of CD247 and FCER1G. Interacts (via transmembrane domain) with signaling subunits; this interaction is a prerequisite for receptor complex expression on the cell surface and intracellular signal transduction. Binds the Fc region of antigen-complexed IgG with a preference for IgG1 and IgG3 isotypes. Interacts with CD2; this interaction is involved in NK cell activation and cytotoxicity. Interacts with S100A4; this interaction inhibits PKC-dependent phosphorylation of FCGR3A. Post-translationally, glycosylated. Glycosylation plays an inhibitory role in the interaction with IgG1 and IgG2. Undergoes rapid ectodomain shedding upon NK cell stimulation. The soluble form is produced by a proteolytic cleavage mediated by ADAM17. Repeated stimulation causes receptor shedding, a mechanism that allows for increased NK cell motility and detachment from opsonized target cells while avoiding activation-induced NK cell apoptosis. As to expression, lymphocytes and monocytes.

The protein resides in the cell membrane. It is found in the secreted. Functionally, receptor for the invariable Fc fragment of immunoglobulin gamma (IgG). Optimally activated upon binding of clustered antigen-IgG complexes displayed on cell surfaces, triggers lysis of antibody-coated cells, a process known as antibody-dependent cellular cytotoxicity (ADCC). Does not bind free monomeric IgG, thus avoiding inappropriate effector cell activation in the absence of antigenic trigger. Mediates IgG effector functions on natural killer (NK) cells. Binds antigen-IgG complexes generated upon infection and triggers NK cell-dependent cytokine production and degranulation to limit viral load and propagation. Involved in the generation of memory-like adaptive NK cells capable to produce high amounts of IFNG and to efficiently eliminate virus-infected cells via ADCC. Regulates NK cell survival and proliferation, in particular by preventing NK cell progenitor apoptosis. Fc-binding subunit that associates with CD247 and/or FCER1G adapters to form functional signaling complexes. Following the engagement of antigen-IgG complexes, triggers phosphorylation of immunoreceptor tyrosine-based activation motif (ITAM)-containing adapters with subsequent activation of phosphatidylinositol 3-kinase signaling and sustained elevation of intracellular calcium that ultimately drive NK cell activation. The ITAM-dependent signaling coupled to receptor phosphorylation by PKC mediates robust intracellular calcium flux that leads to production of pro-inflammatory cytokines, whereas in the absence of receptor phosphorylation it mainly activates phosphatidylinositol 3-kinase signaling leading to cell degranulation. Costimulates NK cells and trigger lysis of target cells independently of IgG binding. Mediates the antitumor activities of therapeutic antibodies. Upon ligation on monocytes triggers TNFA-dependent ADCC of IgG-coated tumor cells. Mediates enhanced ADCC in response to afucosylated IgGs. This Macaca fascicularis (Crab-eating macaque) protein is Low affinity immunoglobulin gamma Fc region receptor III-A (FCGR3A).